Reading from the N-terminus, the 308-residue chain is Tryptophan 2,3-dioxygenase (308 aa).

Residues 1-37 (MKPPGDNAPAGCPFSGARAAQPAHEAPHVPGDAAGET) form a disordered region. Residues 77–81 (FIIQH), Y139, and R143 each bind substrate. Position 266 (H266) interacts with heme. T280 lines the substrate pocket.

Belongs to the tryptophan 2,3-dioxygenase family. In terms of assembly, homotetramer. Requires heme as cofactor.

The catalysed reaction is L-tryptophan + O2 = N-formyl-L-kynurenine. It participates in amino-acid degradation; L-tryptophan degradation via kynurenine pathway; L-kynurenine from L-tryptophan: step 1/2. In terms of biological role, heme-dependent dioxygenase that catalyzes the oxidative cleavage of the L-tryptophan (L-Trp) pyrrole ring and converts L-tryptophan to N-formyl-L-kynurenine. Catalyzes the oxidative cleavage of the indole moiety. The polypeptide is Tryptophan 2,3-dioxygenase (Burkholderia ambifaria (strain MC40-6)).